A 142-amino-acid polypeptide reads, in one-letter code: Large ribosomal subunit protein uL16 (142 aa).

The protein belongs to the universal ribosomal protein uL16 family. In terms of assembly, part of the 50S ribosomal subunit.

In terms of biological role, binds 23S rRNA and is also seen to make contacts with the A and possibly P site tRNAs. This is Large ribosomal subunit protein uL16 from Phenylobacterium zucineum (strain HLK1).